A 225-amino-acid chain; its full sequence is Insulin-induced gene 2 protein (225 aa).

Topologically, residues 1-28 (MAEGETESPRPKKRGPYISSVTSQSVNV) are cytoplasmic. Residues 29 to 51 (VIRGVVLFFIGVFLALVLNLLQI) traverse the membrane as a helical segment. Residues 52–70 (QRNVTLFPPDVITSIFSSA) are Lumenal-facing. A helical membrane pass occupies residues 71 to 88 (WWVPPCCGTASAVIGLLY). The Cytoplasmic portion of the chain corresponds to 89–103 (PCIDRHLGEPHKFKR). The chain crosses the membrane as a helical span at residues 104-126 (EWSSVMRCVAVFVGINHASAKVD). Over 127 to 129 (FDN) the chain is Lumenal. A helical transmembrane segment spans residues 130-148 (NFQFSLTLAALSVGLWWTF). At 149 to 153 (DRSRS) the chain is on the cytoplasmic side. At S151 the chain carries Phosphoserine. The chain crosses the membrane as a helical span at residues 154-175 (GFGLGVGIAFLATVVTQLLVYN). Topologically, residues 176–189 (GVYQYTSPDFLYVR) are lumenal. The helical transmembrane segment at 190-207 (SWLPCIFFAGGITMGNIG) threads the bilayer. Over 208–225 (RQLAMYECKVIAEKSHQE) the chain is Cytoplasmic. C215 is subject to Cysteine sulfenic acid (-SOH); alternate. Residue C215 forms a Glycyl cysteine thioester (Cys-Gly) (interchain with G-Cter in ubiquitin); alternate linkage. Positions 219–225 (AEKSHQE) match the KxHxx motif.

It belongs to the INSIG family. Interacts with SCAP; interaction is direct and only takes place in the presence of sterols; it prevents interaction between SCAP and the coat protein complex II (COPII). Associates with the SCAP-SREBP complex (composed of SCAP and SREBF1/SREBP1 or SREBF2/SREBP2); association is mediated via its interaction with SCAP and only takes place in the presence of sterols. Interacts with RNF139. Interacts with RNF145. In terms of processing, phosphorylation at Ser-151 by PCK1 reduces binding to oxysterol, disrupting the interaction between INSIG2 and SCAP, thereby promoting nuclear translocation of SREBP proteins (SREBF1/SREBP1 or SREBF2/SREBP2) and subsequent transcription of downstream lipogenesis-related genes. Post-translationally, polyubiquitinated by AMFR/gp78 at Cys-215 in some tissues such as adipose tissues, undifferentiated myoblasts and liver, leading to its degradation. In differentiated myotubes, Cys-215 oxidation prevents ubiquitination at the same site, resulting in protein stabilization. Oxidized at Cys-215 in differentiated myotubes, preventing ubiquitination at the same site, and resulting in protein stabilization.

It localises to the endoplasmic reticulum membrane. In terms of biological role, oxysterol-binding protein that mediates feedback control of cholesterol synthesis by controlling both endoplasmic reticulum to Golgi transport of SCAP and degradation of HMGCR. Acts as a negative regulator of cholesterol biosynthesis by mediating the retention of the SCAP-SREBP complex in the endoplasmic reticulum, thereby blocking the processing of sterol regulatory element-binding proteins (SREBPs) SREBF1/SREBP1 and SREBF2/SREBP2. Binds oxysterol, including 22-hydroxycholesterol, 24-hydroxycholesterol, 25-hydroxycholesterol and 27-hydroxycholesterol, regulating interaction with SCAP and retention of the SCAP-SREBP complex in the endoplasmic reticulum. In presence of oxysterol, interacts with SCAP, retaining the SCAP-SREBP complex in the endoplasmic reticulum, thereby preventing SCAP from escorting SREBF1/SREBP1 and SREBF2/SREBP2 to the Golgi. Sterol deprivation or phosphorylation by PCK1 reduce oxysterol-binding, disrupting the interaction between INSIG2 and SCAP, thereby promoting Golgi transport of the SCAP-SREBP complex, followed by processing and nuclear translocation of SREBF1/SREBP1 and SREBF2/SREBP2. Also regulates cholesterol synthesis by regulating degradation of HMGCR: initiates the sterol-mediated ubiquitin-mediated endoplasmic reticulum-associated degradation (ERAD) of HMGCR via recruitment of the reductase to the ubiquitin ligase RNF139. The protein is Insulin-induced gene 2 protein of Rattus norvegicus (Rat).